We begin with the raw amino-acid sequence, 371 residues long: Cytochrome b (371 aa).

4 helical membrane-spanning segments follow: residues 25-45 (FGSM…FLAV), 69-90 (WMMQ…YIHI), 105-125 (WMSG…GYVL), and 170-190 (FFAL…LHII). Residues histidine 75 and histidine 89 each contribute to the heme b site. 2 residues coordinate heme b: histidine 174 and histidine 188. Histidine 193 is a binding site for a ubiquinone. The next 4 membrane-spanning stretches (helical) occupy residues 218–238 (HKDL…MSFF), 280–300 (LGGA…PFTH), 312–332 (LSQL…WAAT), and 339–358 (FIII…LSFP).

The protein belongs to the cytochrome b family. The cytochrome bc1 complex contains 3 respiratory subunits (MT-CYB, CYC1 and UQCRFS1), 2 core proteins (UQCRC1 and UQCRC2) and probably 6 low-molecular weight proteins. It depends on heme b as a cofactor.

It localises to the mitochondrion inner membrane. Component of the ubiquinol-cytochrome c reductase complex (complex III or cytochrome b-c1 complex) that is part of the mitochondrial respiratory chain. The b-c1 complex mediates electron transfer from ubiquinol to cytochrome c. Contributes to the generation of a proton gradient across the mitochondrial membrane that is then used for ATP synthesis. The polypeptide is Cytochrome b (MT-CYB) (Apodora papuana (Papuan olive python)).